We begin with the raw amino-acid sequence, 60 residues long: GPMRIPEKHRIVREYIRKFGLQLNEFVQETENAWYYIKNIRKKVHEVKKDPGLLKYPVKP.

An FAD-binding site is contributed by 1 to 4 (GPMR). A substrate-binding site is contributed by R4.

This sequence belongs to the flavin monoamine oxidase family. FIG1 subfamily. In terms of assembly, homodimer; non-covalently linked. Requires FAD as cofactor. In terms of processing, contains 2 disulfide bonds. Post-translationally, N-glycosylated. As to expression, expressed by the venom gland.

The protein resides in the secreted. It carries out the reaction an L-alpha-amino acid + O2 + H2O = a 2-oxocarboxylate + H2O2 + NH4(+). In terms of biological role, catalyzes an oxidative deamination of predominantly hydrophobic and aromatic L-amino acids, thus producing hydrogen peroxide that may contribute to the diverse toxic effects of this enzyme. Exhibits diverse biological activities, such as hemorrhage, hemolysis, edema, apoptosis of vascular endothelial cells or tumor cell lines, antibacterial and antiparasitic activities, as well as regulation of platelet aggregation. Effects of snake L-amino oxidases on platelets are controversial, since they either induce aggregation or inhibit agonist-induced aggregation. These different effects are probably due to different experimental conditions. The polypeptide is L-amino-acid oxidase (Bitis gabonica (Gaboon adder)).